The sequence spans 72 residues: MALPKIAEVRKMSDEEIAAAILAAKKKLFELRLQQATRRLEKTHEFKHTRHRLGQLLTVERERQLAQSTPEA.

The protein belongs to the universal ribosomal protein uL29 family.

This Microcystis aeruginosa (strain NIES-843 / IAM M-2473) protein is Large ribosomal subunit protein uL29.